Here is a 336-residue protein sequence, read N- to C-terminus: Homeobox-leucine zipper protein HAT14 (336 aa).

Disordered regions lie at residues 53–141 (RSLS…PDSV) and 160–194 (SNKR…KLRL). The segment covering 64-81 (EDEKKKPAPRAKKSDEFR) has biased composition (basic and acidic residues). The span at 120–129 (VEEEEEEEEA) shows a compositional bias: acidic residues. Low complexity predominate over residues 130–141 (VPSMSVSPPDSV). The segment covering 160–173 (SNKRDIDDEVERSA) has biased composition (basic and acidic residues). A DNA-binding region (homeobox) is located at residues 187–246 (STRKKLRLSKDQSAFLEDSFKEHSTLNPKQKIALAKQLNLRPRQVEVWFQNRRARTKLKQ). The interval 254-275 (LKRCCESLTEENRRLQKEVKEL) is leucine-zipper.

The protein belongs to the HD-ZIP homeobox family. Class II subfamily.

The protein resides in the nucleus. Probable transcription factor. The polypeptide is Homeobox-leucine zipper protein HAT14 (HAT14) (Arabidopsis thaliana (Mouse-ear cress)).